The sequence spans 359 residues: 5-amino-6-(D-ribitylamino)uracil--L-tyrosine 4-hydroxyphenyl transferase (359 aa).

Residues 45 to 282 enclose the Radical SAM core domain; it reads VTYVLNANIN…VYAISRIFFK (238 aa). Cys-59, Cys-63, and Cys-66 together coordinate [4Fe-4S] cluster.

It belongs to the radical SAM superfamily. CofH family. As to quaternary structure, consists of two subunits, CofG and CofH. [4Fe-4S] cluster serves as cofactor.

It carries out the reaction 5-amino-6-(D-ribitylamino)uracil + L-tyrosine + S-adenosyl-L-methionine = 5-amino-5-(4-hydroxybenzyl)-6-(D-ribitylimino)-5,6-dihydrouracil + 2-iminoacetate + 5'-deoxyadenosine + L-methionine + H(+). It participates in cofactor biosynthesis; coenzyme F0 biosynthesis. Catalyzes the radical-mediated synthesis of 5-amino-5-(4-hydroxybenzyl)-6-(D-ribitylimino)-5,6-dihydrouracil from 5-amino-6-(D-ribitylamino)uracil and L-tyrosine. The chain is 5-amino-6-(D-ribitylamino)uracil--L-tyrosine 4-hydroxyphenyl transferase from Methanococcus vannielii (strain ATCC 35089 / DSM 1224 / JCM 13029 / OCM 148 / SB).